Here is a 251-residue protein sequence, read N- to C-terminus: Putative cysteine-rich repeat secretory protein 36 (251 aa).

The signal sequence occupies residues 1–28 (MHSSYSLSKCLVCFTILAIQTLIRRVSS). Gnk2-homologous domains follow at residues 35–139 (YLNH…NSPP) and 144–248 (YENT…LYPF).

Belongs to the cysteine-rich repeat secretory protein family.

The protein resides in the secreted. This Arabidopsis thaliana (Mouse-ear cress) protein is Putative cysteine-rich repeat secretory protein 36 (CRRSP36).